The primary structure comprises 176 residues: MSAGGASVPPPPNPAVSFPPPRVTLPAGPDILRTYSGAFVCLEILFGGLVWILVASSNVPLPLLQGWVMFVSVTAFFFSLLFLGMFLSGMVAQIDANWNFLDFAYHFTVFVFYFGAFLLEAAATSLHDLHCNTTITGQPLLSDNQYNINVAASIFAFMTTACYGCSLGLALRRWRP.

Over 1-34 (MSAGGASVPPPPNPAVSFPPPRVTLPAGPDILRT) the chain is Cytoplasmic. Residues 31-175 (ILRTYSGAFV…SLGLALRRWR (145 aa)) form the MARVEL domain. Residues 35–55 (YSGAFVCLEILFGGLVWILVA) form a helical membrane-spanning segment. Residues 56-66 (SSNVPLPLLQG) are Lumenal-facing. Residues 67 to 87 (WVMFVSVTAFFFSLLFLGMFL) form a helical membrane-spanning segment. Over 88-102 (SGMVAQIDANWNFLD) the chain is Cytoplasmic. A helical membrane pass occupies residues 103–123 (FAYHFTVFVFYFGAFLLEAAA). At 124-149 (TSLHDLHCNTTITGQPLLSDNQYNIN) the chain is on the lumenal side. Asn132 is a glycosylation site (N-linked (GlcNAc...) asparagine). Residues 150–170 (VAASIFAFMTTACYGCSLGLA) traverse the membrane as a helical segment. Topologically, residues 171-176 (LRRWRP) are cytoplasmic.

This sequence belongs to the MAL family. Interacts with TPD52L2. Predominantly expressed in kidney, lung, and liver. Also found in thyroid gland, stomach and, at lower levels in testis and small intestine.

The protein localises to the cell membrane. It is found in the apical cell membrane. Its subcellular location is the endomembrane system. The protein resides in the cytoplasm. It localises to the perinuclear region. Its function is as follows. Member of the machinery of polarized transport. Required for the indirect transcytotic route at the step of the egress of the transcytosing cargo from perinuclear endosomes in order for it to travel to the apical surface via a raft-dependent pathway. This chain is Protein MAL2 (MAL2), found in Homo sapiens (Human).